A 101-amino-acid polypeptide reads, in one-letter code: Small ribosomal subunit protein uS10 (101 aa).

This sequence belongs to the universal ribosomal protein uS10 family. In terms of assembly, part of the 30S ribosomal subunit.

In terms of biological role, involved in the binding of tRNA to the ribosomes. This Mycoplasmopsis synoviae (strain 53) (Mycoplasma synoviae) protein is Small ribosomal subunit protein uS10.